A 364-amino-acid polypeptide reads, in one-letter code: RNA-binding protein ZC3H11 (364 aa).

The segment at R64 to E92 adopts a C3H1-type zinc-finger fold. An MKT1-binding motif motif is present at residues V194–Y199. Positions E340–L364 are disordered. Over residues L346–G357 the composition is skewed to basic and acidic residues.

As to quaternary structure, interacts (via MKT1-binding motif) with MKT1. Interacts with PBP1 (via C-terminus); the interaction is direct. Post-translationally, phosphorylated at the N-terminus. CK1.2-dependent phosphorylation may lead to proteasome-dependent degradation of ZC3H11 in absence of stress.

The protein localises to the cytoplasm. Functionally, RNA-binding protein involved in regulation of mRNA stability. Binds AU-rich regions in the 3'-UTR of mRNAs and promotes their stabilization by recruiting a MKT1-containing complex. Stabilizes chaperone mRNAs during stress that causes an accumulation of misfolded or unfolded proteins in the cytoplasm. In Trypanosoma brucei brucei (strain 927/4 GUTat10.1), this protein is RNA-binding protein ZC3H11.